We begin with the raw amino-acid sequence, 1207 residues long: MSRLQKQNYEILSGTSTSRLKNHQHPRESESLAYEEPDQMVRNHLNGQLVANGNGKTRKNSNSETMTNGKKSKLNTEGSGSGSGKTLNYNNNNNNNNSISATNGQYTNSSSKTTSASARDYTYRETISPPTPPSPPTTNVADIVCISDAESEDGRDPEREYYDQDMEEDEPNGIEIDESSSSLSKAKSNNAAAAAAAAAAAAAAAASKASSSTTPSYAMPTSNSTPLDLDNEAHQRDLEAVTDLKYYVKLYSDEAVSLNDFKIIRVLGTGAYGRVFLVRKLTRHDAGKLYAMKVLNKITVVQKRKTAEHTKTERVVLEAIQRNPFLVSLHYAFQSSSKLYLVLDFANGGELFTHLYHSENFEESRVRVYIAEVVLALEQLHQLGIIYRDIKLENILLDGEGHIVLSDFGLSKILTAENEYRAHSFCGTLEYMAPEIIRTGPPGHDSAVDWWSVGVLTFELLTGASPFATSDGQVQQSEISRRIQKEQPMIPSSFSANARDFVLKMLEKNPKRRLGGNHRDASEIKEHPFFNGINWQELRTKRRKAPYKPTLTAEDDVQNFSNEFTDQVPEDPECDAPPSRIRLFRGYTYVAPEHLEQMRRDNHCEIQYFNTGLQNIPCRPDDLELGTRTSNGAYGTCHFVVDSSTDLVFLAKIIPLSKFRPSEVDALISCALDTTNHKNIVSYHGTFREKCETWIVMEYLSGPELTASIRMDEDSCREIFLQLVMAVRHIHSKHFIHGDLKPENIMFENREDRTVKLIDFGSACYNNRFKSWKDKPRYTLDYAPPEMLADANLVTYSPAVDIYGLGATLYTMLVGHRPYRQNEDDVDHSAAAHHELRKRMRRGTFNQRSMRWESASPAFRHLVSWCLQRDPADRPTLSDILDSEWLQYGSNDPDVDIILPQQMVVDLSEDTMEQPTGGMFDDQQQLEFMHDKSAEDEGITLVSEPMDTTVATHESRRNAAAFSSVVAPTTDDEIVHERFDPAFEVQADFYGFDENAPPLPLPEEYYSELPLPEEDRQYIPPPPALIPVEPETTFRRPRTRQQRRTESQLVQPVSVATYEDSKASLRVLMQQLPPPGDNVVARIPKRTHRVVRTLPPTFGTTKREENFYGFSKTAISWRKTRASWRHFCLLINGVQQVLKVRFKKARRVYCLPHIKEEKLDHAYEKPLTFPRPKAQLKRTKREPKVPRPPTRVQPERARAMRQLYQFQ.

Over residues 1–19 (MSRLQKQNYEILSGTSTSR) the composition is skewed to polar residues. Disordered stretches follow at residues 1–119 (MSRL…ASAR), 164–183 (QDME…SSSL), and 210–230 (SSST…LDLD). Phosphoserine occurs at positions 29 and 31. Polar residues predominate over residues 45–69 (LNGQLVANGNGKTRKNSNSETMTNG). Low complexity predominate over residues 88-97 (NYNNNNNNNN). A compositionally biased stretch (polar residues) spans 98–108 (SISATNGQYTN). The span at 109–118 (SSSKTTSASA) shows a compositional bias: low complexity. The span at 164-178 (QDMEEDEPNGIEIDE) shows a compositional bias: acidic residues. A compositionally biased stretch (polar residues) spans 213–226 (TTPSYAMPTSNSTP). In terms of domain architecture, Protein kinase 1 spans 261–530 (FKIIRVLGTG…ASEIKEHPFF (270 aa)). ATP is bound by residues 267–275 (LGTGAYGRV) and lysine 293. The Proton acceptor role is filled by aspartate 389. A Phosphoserine modification is found at serine 424. Residues 531–599 (NGINWQELRT…VAPEHLEQMR (69 aa)) form the AGC-kinase C-terminal domain. The residue at position 588 (threonine 588) is a Phosphothreonine. In terms of domain architecture, Protein kinase 2 spans 623–886 (LELGTRTSNG…LSDILDSEWL (264 aa)). ATP contacts are provided by residues 629 to 637 (TSNGAYGTC) and lysine 652. The active-site Proton acceptor is the aspartate 739. Threonine 1045 is subject to Phosphothreonine. Residue serine 1047 is modified to Phosphoserine. The interval 1168-1197 (TFPRPKAQLKRTKREPKVPRPPTRVQPERA) is disordered.

This sequence belongs to the protein kinase superfamily. Ser/Thr protein kinase family. Interacts with lola. Interacts with proteins of the male specific lethal (MSL) dosage compensation complex; this interaction is mediated by the kinase domains. Mg(2+) is required as a cofactor. Post-translationally, autophosphorylated in vitro.

Its subcellular location is the nucleus. It is found in the chromosome. The enzyme catalyses L-seryl-[protein] + ATP = O-phospho-L-seryl-[protein] + ADP + H(+). It carries out the reaction L-threonyl-[protein] + ATP = O-phospho-L-threonyl-[protein] + ADP + H(+). Phosphorylates 'Ser-10' of histone H3. May regulate gene expression by establishing or maintaining the structure of more open chromatin regions. Also required for normal polytene chromosome structure, for oogenesis and for viability throughout development. Regulates the structure of polytene chromosomes in salivary glands. May phosphorylate 'Ser-1' of histone H2A. This Drosophila melanogaster (Fruit fly) protein is Chromosomal serine/threonine-protein kinase JIL-1.